Consider the following 126-residue polypeptide: Fatty acid-binding protein, liver (126 aa).

Cholate contacts are provided by residues 54–56 (TPN), 99–101 (HEQ), and Arg121.

The protein belongs to the calycin superfamily. Fatty-acid binding protein (FABP) family.

It is found in the cytoplasm. FABPs are thought to play a role in the intracellular transport of long-chain fatty acids and their acyl-CoA esters. This is Fatty acid-binding protein, liver from Anolis pulchellus (Common grass anole).